The following is a 77-amino-acid chain: Acyl carrier protein (77 aa).

The region spanning 1-76 (MENFDKVKDI…DAVKFINSIE (76 aa)) is the Carrier domain. The residue at position 36 (serine 36) is an O-(pantetheine 4'-phosphoryl)serine.

The protein belongs to the acyl carrier protein (ACP) family. Post-translationally, 4'-phosphopantetheine is transferred from CoA to a specific serine of apo-ACP by AcpS. This modification is essential for activity because fatty acids are bound in thioester linkage to the sulfhydryl of the prosthetic group.

Its subcellular location is the cytoplasm. It participates in lipid metabolism; fatty acid biosynthesis. Functionally, carrier of the growing fatty acid chain in fatty acid biosynthesis. The protein is Acyl carrier protein of Staphylococcus saprophyticus subsp. saprophyticus (strain ATCC 15305 / DSM 20229 / NCIMB 8711 / NCTC 7292 / S-41).